Consider the following 438-residue polypeptide: Mitochondrial distribution and morphology protein 12 (438 aa).

Residues Met1–Val438 enclose the SMP-LTD domain. Disordered stretches follow at residues Ser110 to Leu154, Ser185 to Arg277, and Gly353 to Glu379. The segment covering Asp212–Leu226 has biased composition (polar residues). Low complexity predominate over residues Pro227–Ser245. A compositionally biased stretch (polar residues) spans Ser354–Ser364. The segment covering Asp365–Glu379 has biased composition (basic and acidic residues).

This sequence belongs to the MDM12 family. As to quaternary structure, component of the ER-mitochondria encounter structure (ERMES) or MDM complex, composed of mmm1, mdm10, mdm12 and mdm34. A mmm1 homodimer associates with one molecule of mdm12 on each side in a pairwise head-to-tail manner, and the SMP-LTD domains of mmm1 and mdm12 generate a continuous hydrophobic tunnel for phospholipid trafficking.

It is found in the mitochondrion outer membrane. The protein resides in the endoplasmic reticulum membrane. Its function is as follows. Component of the ERMES/MDM complex, which serves as a molecular tether to connect the endoplasmic reticulum (ER) and mitochondria. Components of this complex are involved in the control of mitochondrial shape and protein biogenesis, and function in nonvesicular lipid trafficking between the ER and mitochondria. Mdm12 is required for the interaction of the ER-resident membrane protein mmm1 and the outer mitochondrial membrane-resident beta-barrel protein mdm10. The mdm12-mmm1 subcomplex functions in the major beta-barrel assembly pathway that is responsible for biogenesis of all mitochondrial outer membrane beta-barrel proteins, and acts in a late step after the SAM complex. The mdm10-mdm12-mmm1 subcomplex further acts in the TOM40-specific pathway after the action of the mdm12-mmm1 complex. Essential for establishing and maintaining the structure of mitochondria and maintenance of mtDNA nucleoids. The protein is Mitochondrial distribution and morphology protein 12 of Penicillium rubens (strain ATCC 28089 / DSM 1075 / NRRL 1951 / Wisconsin 54-1255) (Penicillium chrysogenum).